Here is a 357-residue protein sequence, read N- to C-terminus: MAARLAWRRGPGAAGQRPWLLLAPLLLVPLLVRPAEALVEGLYCGTRDCYEVLGVSRSASKAEIARAYRQLARRYHPDRYRPEPGDGPGGAPPSAEAFLLVATAYETLKDEETRKDYDYMLDHPEEYYSHYYHYYSRRLAPKVDVRVVILVSVCAISVFQYFSWWNSYNKSISYLATVPKYRIQATEIAKEQGLLKKAKEKGKNKKSKEEIRDEEENIIKNIIKSKIDIKGGYQKPQVRDLLLFQVLLAPVHLCSYIAWYCRWVYNFNIKGKEYGEEERLYIIRKSMKMSQSQFDSLEDHQKEMFLKRELWIKENYEVYKQEQEEELKKKLANDPRWKRYRRWMKNEGPGRLTFVDD.

A helical membrane pass occupies residues 19-39 (WLLLAPLLLVPLLVRPAEALV). Residues 48–121 (DCYEVLGVSR…ETRKDYDYML (74 aa)) enclose the J domain. The next 2 helical transmembrane spans lie at 147–167 (VVIL…WWNS) and 241–261 (LLLF…AWYC).

Belongs to the DNAJC25 family.

The protein resides in the membrane. In Rattus norvegicus (Rat), this protein is DnaJ homolog subfamily C member 25 (Dnajc25).